The sequence spans 366 residues: Probable quinol oxidase subunit 2 (366 aa).

Positions 1-19 are cleaved as a signal peptide; sequence MSKFKSLLLLFGTLILLSG. C20 carries the N-palmitoyl cysteine lipid modification. Residue C20 is the site of S-diacylglycerol cysteine attachment. 2 helical membrane-spanning segments follow: residues 38 to 58 and 80 to 100; these read FLIL…LGMF and AIIE…LAIP. Positions 330-366 are disordered; it reads EPYNNEFKKDESKNAKEMKKISKDAQDQDNDDHGGGH. Residues 335–366 are compositionally biased toward basic and acidic residues; the sequence is EFKKDESKNAKEMKKISKDAQDQDNDDHGGGH.

It belongs to the cytochrome c oxidase subunit 2 family.

The protein resides in the cell membrane. It carries out the reaction 2 a quinol + O2 = 2 a quinone + 2 H2O. Catalyzes quinol oxidation with the concomitant reduction of oxygen to water. Subunit II transfers the electrons from a quinol to the binuclear center of the catalytic subunit I. This is Probable quinol oxidase subunit 2 (qoxA) from Staphylococcus aureus (strain bovine RF122 / ET3-1).